The sequence spans 281 residues: 4-diphosphocytidyl-2-C-methyl-D-erythritol kinase (281 aa).

The active site involves lysine 15. 98-108 contacts ATP; that stretch reads PTGAGLGGGSS. Aspartate 140 is an active-site residue.

This sequence belongs to the GHMP kinase family. IspE subfamily.

The enzyme catalyses 4-CDP-2-C-methyl-D-erythritol + ATP = 4-CDP-2-C-methyl-D-erythritol 2-phosphate + ADP + H(+). The protein operates within isoprenoid biosynthesis; isopentenyl diphosphate biosynthesis via DXP pathway; isopentenyl diphosphate from 1-deoxy-D-xylulose 5-phosphate: step 3/6. In terms of biological role, catalyzes the phosphorylation of the position 2 hydroxy group of 4-diphosphocytidyl-2C-methyl-D-erythritol. This Neisseria meningitidis serogroup A / serotype 4A (strain DSM 15465 / Z2491) protein is 4-diphosphocytidyl-2-C-methyl-D-erythritol kinase.